The following is a 466-amino-acid chain: Alpha-1,3-mannosyltransferase CMT1 (466 aa).

Positions 1–23 (MFRNTLRTFPRPATPSLPTSSHS) are disordered. At 1 to 33 (MFRNTLRTFPRPATPSLPTSSHSPIARASLSKS) the chain is on the cytoplasmic side. The helical; Signal-anchor for type II membrane protein transmembrane segment at 34 to 54 (PLFVLSLVLVCIFFLSFLSHP) threads the bilayer. Residues 55–466 (DPSARKLQWP…ETRWVQPWLE (412 aa)) are Lumenal-facing.

Mg(2+) serves as cofactor. Requires Mn(2+) as cofactor. The cofactor is Co(2+).

The protein localises to the golgi apparatus membrane. Its pathway is protein modification; protein glycosylation. Its function is as follows. Responsible for addition of mannose residues in an alpha-1,3 linkage to a polymannosly precursor. May be involved in synthesis of capsule glucuronoxylomannan. The protein is Alpha-1,3-mannosyltransferase CMT1 of Cryptococcus neoformans var. neoformans serotype D (strain JEC21 / ATCC MYA-565) (Filobasidiella neoformans).